The following is a 76-amino-acid chain: uncharacterized protein (76 aa).

Residues 36-41 (PDIIIT) are required for interaction with PPP3CA. A phosphothreonine mark is found at T44 and T46.

In terms of assembly, interacts (via PxIxIT motif, when phosphorylated on Thr-44) with PPP3CA. In terms of tissue distribution, not expressed in pancreatic duct cells (at protein level). Abundantly expressed in the pancreas and weakly expressed in the thyroid. Not expressed in pancreatic duct cells (at protein level). Abundantly expressed in the lymph node and weakly expressed in the stomach, trachea and bone marrow.

This is an uncharacterized protein from Homo sapiens (Human).